Consider the following 297-residue polypeptide: Glucuronoxylan 4-O-methyltransferase 3 (297 aa).

Residues 9 to 29 traverse the membrane as a helical segment; sequence LNLKVIFIGSSILILIIIYLA. The segment covering 35-47 has biased composition (low complexity); it reads SSSSKPISKTNLS. Positions 35-63 are disordered; the sequence is SSSSKPISKTNLSQEEEETQHKQEGCPTT.

The protein belongs to the methyltransferase superfamily. Expressed in hypocotyls, roots, rosette leaves, stems and siliques.

It is found in the golgi apparatus membrane. It carries out the reaction glucuronoxylan D-glucuronate + n S-adenosyl-L-methionine = glucuronoxylan 4-O-methyl-D-glucuronate + n S-adenosyl-L-homocysteine + n H(+). Its function is as follows. Methyltransferase catalyzing 4-O-methylation of glucuronic acid side chains on xylan. This Arabidopsis thaliana (Mouse-ear cress) protein is Glucuronoxylan 4-O-methyltransferase 3 (GXM3).